We begin with the raw amino-acid sequence, 201 residues long: Recombination protein RecR (201 aa).

The C4-type zinc finger occupies 57–74; that stretch reads CRICGFITSKDDDPCVIC. In terms of domain architecture, Toprim spans 82 to 178; the sequence is SKIFVVENSQ…KVTRLARGLS (97 aa).

This sequence belongs to the RecR family.

May play a role in DNA repair. It seems to be involved in an RecBC-independent recombinational process of DNA repair. It may act with RecF and RecO. This is Recombination protein RecR from Oenococcus oeni (strain ATCC BAA-331 / PSU-1).